The primary structure comprises 102 residues: A-type ATP synthase subunit F (102 aa).

It belongs to the V-ATPase F subunit family. Has multiple subunits with at least A(3), B(3), C, D, E, F, H, I and proteolipid K(x).

It is found in the cell membrane. Functionally, component of the A-type ATP synthase that produces ATP from ADP in the presence of a proton gradient across the membrane. In Thermococcus kodakarensis (strain ATCC BAA-918 / JCM 12380 / KOD1) (Pyrococcus kodakaraensis (strain KOD1)), this protein is A-type ATP synthase subunit F.